The chain runs to 71 residues: Large ribosomal subunit protein uL29 (71 aa).

This sequence belongs to the universal ribosomal protein uL29 family.

In Rickettsia canadensis (strain McKiel), this protein is Large ribosomal subunit protein uL29.